Consider the following 678-residue polypeptide: ATP-dependent RNA helicase DHX58 (678 aa).

The Helicase ATP-binding domain occupies 11-188; that stretch reads ILPALEGKNI…QGAIDHILQL (178 aa). 24-31 contacts ATP; the sequence is LPTGAGKT. The short motif at 131–134 is the DECH box element; it reads DECH. In terms of domain architecture, Helicase C-terminal spans 353-514; sequence MLERILLKQF…KAVAAVQKMD (162 aa). Residues 489 to 546 adopt a coiled-coil conformation; it reads EMKRELTNEALEVLMEKAVAAVQKMDPDEFKAKIRDLQQASLVKRAARAAHREIQQGQ. The RLR CTR domain maps to 542-669; sequence IQQGQFLPEH…PVFDILQDCT (128 aa). Residues cysteine 556, cysteine 559, cysteine 612, and cysteine 615 each contribute to the Zn(2+) site. An RNA-binding region spans residues 572-655; it reads VEGTHHVNVN…KIQAKKWSRV (84 aa).

The protein belongs to the helicase family. RLR subfamily. As to quaternary structure, monomer in the absence of dsRNA. Homodimer in the presence of dsRNA. Interacts with RIGI (via CARD domain), MAVS/IPS1 and DDX60. Found in a complex with RIGI and IFIH1/MDA5. Interacts with ANKRD17. Directly interacts with ATG5 and ATG12, either as ATG5 and ATG12 monomers or as ATG12-ATG5 conjugates. Highly expressed in mammary tissues. Expressed in liver and testis. Expressed at lower level in spleen, embryo, mammary gland and breast tumors.

The protein localises to the cytoplasm. It catalyses the reaction ATP + H2O = ADP + phosphate + H(+). In terms of biological role, acts as a regulator of RIGI and IFIH1/MDA5 mediated antiviral signaling. Cannot initiate antiviral signaling as it lacks the CARD domain required for activating MAVS/IPS1-dependent signaling events. Can have both negative and positive regulatory functions related to RIGI and IFIH1/MDA5 signaling and this role in regulating signaling may be complex and could probably depend on characteristics of the infecting virus or target cells, or both. Its inhibitory action on RIG-I signaling may involve the following mechanisms: competition with RIGI for binding to the viral RNA, binding to RIGI and inhibiting its dimerization and interaction with MAVS/IPS1, competing with IKBKE in its binding to MAVS/IPS1 thereby inhibiting activation of interferon regulatory factor 3 (IRF3). Its positive regulatory role may involve unwinding or stripping nucleoproteins of viral RNA thereby facilitating their recognition by RIGI and IFIH1/MDA5. Involved in the innate immune response to various RNA viruses and some DNA viruses such as poxviruses, and also to the bacterial pathogen Listeria monocytogenes. Can bind both ssRNA and dsRNA, with a higher affinity for dsRNA. Shows a preference to 5'-triphosphorylated RNA, although it can recognize RNA lacking a 5'-triphosphate. The protein is ATP-dependent RNA helicase DHX58 of Mus musculus (Mouse).